The sequence spans 250 residues: Kallikrein-9 (250 aa).

The N-terminal stretch at 1 to 15 is a signal peptide; it reads MKLGLLCALLSLLAG. Positions 23 to 249 constitute a Peptidase S1 domain; it reads AIGAEECRPN…YLDWIQEIME (227 aa). 6 cysteine pairs are disulfide-bonded: cysteine 29–cysteine 164, cysteine 48–cysteine 64, cysteine 136–cysteine 238, cysteine 143–cysteine 210, cysteine 175–cysteine 189, and cysteine 200–cysteine 225. Active-site charge relay system residues include histidine 63 and aspartate 111. Asparagine 131 and asparagine 166 each carry an N-linked (GlcNAc...) asparagine glycan. The active-site Charge relay system is serine 204. Asparagine 211 carries an N-linked (GlcNAc...) asparagine glycan.

It belongs to the peptidase S1 family. Kallikrein subfamily. Skin, thymus, trachea, cerebellum and spinal cord.

The protein localises to the secreted. In Homo sapiens (Human), this protein is Kallikrein-9 (KLK9).